Consider the following 115-residue polypeptide: Large ribosomal subunit protein uL18 (115 aa).

The protein belongs to the universal ribosomal protein uL18 family. As to quaternary structure, part of the 50S ribosomal subunit; part of the 5S rRNA/L5/L18/L25 subcomplex. Contacts the 5S and 23S rRNAs.

In terms of biological role, this is one of the proteins that bind and probably mediate the attachment of the 5S RNA into the large ribosomal subunit, where it forms part of the central protuberance. The sequence is that of Large ribosomal subunit protein uL18 from Ruthia magnifica subsp. Calyptogena magnifica.